The sequence spans 166 residues: Small ribosomal subunit protein uS5 (166 aa).

Residues 12-75 (YIEKLVQVNR…EAARRNMIQV (64 aa)) form the S5 DRBM domain.

This sequence belongs to the universal ribosomal protein uS5 family. Part of the 30S ribosomal subunit. Contacts proteins S4 and S8.

In terms of biological role, with S4 and S12 plays an important role in translational accuracy. Located at the back of the 30S subunit body where it stabilizes the conformation of the head with respect to the body. In Pseudomonas syringae pv. tomato (strain ATCC BAA-871 / DC3000), this protein is Small ribosomal subunit protein uS5.